Reading from the N-terminus, the 469-residue chain is Probable Xaa-Pro aminopeptidase PEPP (469 aa).

4 residues coordinate Mn(2+): Asp264, Asp275, Glu398, and Glu438.

It belongs to the peptidase M24B family. The cofactor is Mn(2+).

It catalyses the reaction Release of any N-terminal amino acid, including proline, that is linked to proline, even from a dipeptide or tripeptide.. Catalyzes the removal of a penultimate prolyl residue from the N-termini of peptides. The protein is Probable Xaa-Pro aminopeptidase PEPP (PEPP) of Ajellomyces capsulatus (strain H143) (Darling's disease fungus).